The sequence spans 353 residues: UDP-N-acetylglucosamine--N-acetylmuramyl-(pentapeptide) pyrophosphoryl-undecaprenol N-acetylglucosamine transferase (353 aa).

UDP-N-acetyl-alpha-D-glucosamine contacts are provided by residues 15 to 17 (TGG), asparagine 125, arginine 165, serine 186, and glutamine 286.

Belongs to the glycosyltransferase 28 family. MurG subfamily.

It localises to the cell inner membrane. It catalyses the reaction di-trans,octa-cis-undecaprenyl diphospho-N-acetyl-alpha-D-muramoyl-L-alanyl-D-glutamyl-meso-2,6-diaminopimeloyl-D-alanyl-D-alanine + UDP-N-acetyl-alpha-D-glucosamine = di-trans,octa-cis-undecaprenyl diphospho-[N-acetyl-alpha-D-glucosaminyl-(1-&gt;4)]-N-acetyl-alpha-D-muramoyl-L-alanyl-D-glutamyl-meso-2,6-diaminopimeloyl-D-alanyl-D-alanine + UDP + H(+). It participates in cell wall biogenesis; peptidoglycan biosynthesis. Functionally, cell wall formation. Catalyzes the transfer of a GlcNAc subunit on undecaprenyl-pyrophosphoryl-MurNAc-pentapeptide (lipid intermediate I) to form undecaprenyl-pyrophosphoryl-MurNAc-(pentapeptide)GlcNAc (lipid intermediate II). This chain is UDP-N-acetylglucosamine--N-acetylmuramyl-(pentapeptide) pyrophosphoryl-undecaprenol N-acetylglucosamine transferase, found in Chlamydia muridarum (strain MoPn / Nigg).